Here is a 232-residue protein sequence, read N- to C-terminus: Ribosomal RNA small subunit methyltransferase G (232 aa).

Residues glycine 93, leucine 98, 144–145 (VE), and arginine 163 contribute to the S-adenosyl-L-methionine site.

It belongs to the methyltransferase superfamily. RNA methyltransferase RsmG family.

It is found in the cytoplasm. The enzyme catalyses guanosine(527) in 16S rRNA + S-adenosyl-L-methionine = N(7)-methylguanosine(527) in 16S rRNA + S-adenosyl-L-homocysteine. Functionally, specifically methylates the N7 position of guanine in position 527 of 16S rRNA. The protein is Ribosomal RNA small subunit methyltransferase G of Burkholderia pseudomallei (strain 1106a).